The sequence spans 210 residues: Ribosomal RNA small subunit methyltransferase G (210 aa).

Residues G80, L85, 131–132, and R146 each bind S-adenosyl-L-methionine; that span reads VE.

This sequence belongs to the methyltransferase superfamily. RNA methyltransferase RsmG family.

The protein localises to the cytoplasm. The catalysed reaction is guanosine(527) in 16S rRNA + S-adenosyl-L-methionine = N(7)-methylguanosine(527) in 16S rRNA + S-adenosyl-L-homocysteine. Functionally, specifically methylates the N7 position of guanine in position 527 of 16S rRNA. This chain is Ribosomal RNA small subunit methyltransferase G, found in Pasteurella multocida (strain Pm70).